A 135-amino-acid polypeptide reads, in one-letter code: NADPH-dependent 7-cyano-7-deazaguanine reductase (135 aa).

Residue cysteine 48 is the Thioimide intermediate of the active site. The active-site Proton donor is the aspartate 55. Substrate is bound by residues 70–72 (LEL) and 89–90 (HE).

This sequence belongs to the GTP cyclohydrolase I family. QueF type 1 subfamily.

Its subcellular location is the cytoplasm. It carries out the reaction 7-aminomethyl-7-carbaguanine + 2 NADP(+) = 7-cyano-7-deazaguanine + 2 NADPH + 3 H(+). The protein operates within tRNA modification; tRNA-queuosine biosynthesis. Functionally, catalyzes the NADPH-dependent reduction of 7-cyano-7-deazaguanine (preQ0) to 7-aminomethyl-7-deazaguanine (preQ1). This Prochlorococcus marinus (strain SARG / CCMP1375 / SS120) protein is NADPH-dependent 7-cyano-7-deazaguanine reductase.